A 382-amino-acid polypeptide reads, in one-letter code: Porphobilinogen deaminase, chloroplastic (382 aa).

The transit peptide at 1–62 (MDIASSSLSQ…KQSSSGFVKA (62 aa)) directs the protein to the chloroplast. Arg-80 and Ser-82 together coordinate dipyrromethane. Ser-123 is subject to Phosphoserine. Dipyrromethane-binding positions include 156-157 (KD), 200-206 (TASLRRK), and 223-229 (RGNVQTR). Asp-157 functions as the Proton donor/acceptor in the catalytic mechanism. At Cys-316 the chain carries S-(dipyrrolylmethanemethyl)cysteine.

The protein belongs to the HMBS family. In terms of assembly, monomer. Requires dipyrromethane as cofactor.

Its subcellular location is the plastid. It localises to the chloroplast. The enzyme catalyses 4 porphobilinogen + H2O = hydroxymethylbilane + 4 NH4(+). It functions in the pathway porphyrin-containing compound metabolism; protoporphyrin-IX biosynthesis; coproporphyrinogen-III from 5-aminolevulinate: step 2/4. It participates in porphyrin-containing compound metabolism; chlorophyll biosynthesis. Inhibited by NH(3), heavy-metal ions, hydroxylamine and 2-bromoporphobilinogen. Not inhibited by N-ethylmaleimide. Its function is as follows. Tetrapolymerization of the monopyrrole PBG into the hydroxymethylbilane pre-uroporphyrinogen in several discrete steps. The chain is Porphobilinogen deaminase, chloroplastic (HEMC) from Arabidopsis thaliana (Mouse-ear cress).